Reading from the N-terminus, the 164-residue chain is Peptidyl-prolyl cis-trans isomerase A-like 4H (164 aa).

The PPIase cyclophilin-type domain maps to 7-163 (FFDITVDGKP…KKITIADCGQ (157 aa)). Asn71 and Asn108 each carry an N-linked (GlcNAc...) asparagine glycan.

Belongs to the cyclophilin-type PPIase family. PPIase A subfamily.

Its subcellular location is the cytoplasm. The enzyme catalyses [protein]-peptidylproline (omega=180) = [protein]-peptidylproline (omega=0). In terms of biological role, PPIases accelerate the folding of proteins. It catalyzes the cis-trans isomerization of proline imidic peptide bonds in oligopeptides. The protein is Peptidyl-prolyl cis-trans isomerase A-like 4H of Homo sapiens (Human).